The sequence spans 64 residues: Large ribosomal subunit protein uL30 (64 aa).

Residues 1-22 (MSEQVKRVRVTQVGSPIGRKPG) form a disordered region.

It belongs to the universal ribosomal protein uL30 family. Part of the 50S ribosomal subunit.

The protein is Large ribosomal subunit protein uL30 of Acidiphilium cryptum (strain JF-5).